A 312-amino-acid polypeptide reads, in one-letter code: MEGECRVLSIQSHVVRGYVGNRAAMFPLQVLGFEVDAVNSVQFSNHTGYAHWKGQVLKSQELHELYEGLKVNDVNKYDYVLTGYTRDKSFLAMVVDIVRELKQQNSRLVYVCDPVMGDKWNGEGSMYVPQDLLPVYRDKVVPVADIITPNQFEAELLSGRKIHSQEEAFEVMDMLHCMGPDTVVITSSDLPSSQGSDYLIALGSQRMRKPDGSTVTQRIRMEMRKVEAVFVGTGDLFAAMLLAWTHKHPDNLKVACEKTVSAMQHVLQRTIRCAKAEAGEGQKPSPAQLELRMVQSKRDIEDPEIVVQATVL.

Met-1 is modified (N-acetylmethionine). Pyridoxal contacts are provided by Ser-12 and Thr-47. Thr-47 contacts pyridoxal 5'-phosphate. Ser-59 carries the phosphoserine modification. Asp-113 contacts ATP. Asp-113 lines the Na(+) pocket. Asp-118 is a Mg(2+) binding site. Thr-148 provides a ligand contact to Na(+). 150-153 lines the ATP pocket; the sequence is NQFE. Ser-164 is modified (phosphoserine). Thr-186 contacts Na(+). 186–187 contacts ATP; the sequence is TS. Ser-213 bears the Phosphoserine mark. ATP contacts are provided by residues 226-228 and Thr-233; that span reads VEA. Pyridoxal 5'-phosphate is bound at residue 234–235; that stretch reads GD. Asp-235 acts as the Proton acceptor in catalysis. Ser-285 carries the post-translational modification Phosphoserine.

Belongs to the pyridoxine kinase family. Homodimer. The cofactor is Zn(2+). It depends on Mg(2+) as a cofactor.

Its subcellular location is the cytoplasm. It localises to the cytosol. It carries out the reaction pyridoxal + ATP = pyridoxal 5'-phosphate + ADP + H(+). It catalyses the reaction pyridoxamine + ATP = pyridoxamine 5'-phosphate + ADP + H(+). The enzyme catalyses pyridoxine + ATP = pyridoxine 5'-phosphate + ADP + H(+). It participates in cofactor metabolism; pyridoxal 5'-phosphate salvage; pyridoxal 5'-phosphate from pyridoxal: step 1/1. It functions in the pathway cofactor metabolism; pyridoxal 5'-phosphate salvage; pyridoxine 5'-phosphate from pyridoxine: step 1/1. The protein operates within cofactor metabolism; pyridoxal 5'-phosphate salvage; pyridoxamine 5'-phosphate from pyridoxamine: step 1/1. With respect to regulation, activity is increased in the presence of K(+)or Na(+). Catalyzes the phosphorylation of the dietary vitamin B6 vitamers pyridoxal (PL), pyridoxine (PN) and pyridoxamine (PM) to form pyridoxal 5'-phosphate (PLP), pyridoxine 5'-phosphate (PNP) and pyridoxamine 5'-phosphate (PMP), respectively. PLP is the active form of vitamin B6, and acts as a cofactor for over 140 different enzymatic reactions. This chain is Pyridoxal kinase, found in Mus musculus (Mouse).